We begin with the raw amino-acid sequence, 723 residues long: Nicastrin (723 aa).

An N-terminal signal peptide occupies residues 1 to 16; that stretch reads MKKWLVIVLIIAGIRC. Residues 17-678 lie on the Extracellular side of the membrane; the sequence is DGFSDQVFRT…ESVNLYLMED (662 aa). 6 N-linked (GlcNAc...) asparagine glycosylation sites follow: Asn-40, Asn-181, Asn-271, Asn-328, Asn-409, and Asn-627. A helical transmembrane segment spans residues 679–699; that stretch reads ASFEYTMILIAVISALLSIFA. Topologically, residues 700–723 are cytoplasmic; that stretch reads VGRCSETTFIVDEGEPAAEGGEPL.

Belongs to the nicastrin family. Component of the gamma-secretase complex, a complex probably composed of the presenilin homodimer (sel-12, hop-1 or spe-4), nicastrin (aph-2), aph-1 and pen-2.

The protein resides in the membrane. Its function is as follows. Essential subunit of the gamma-secretase complex, an endoprotease complex that catalyzes the intramembrane cleavage of integral membrane proteins such as Notch (glp-1 or lin-12). It may represents a stabilizing cofactor required for the assembly of the gamma-secretase complex. In Caenorhabditis elegans, this protein is Nicastrin (aph-2).